We begin with the raw amino-acid sequence, 496 residues long: Fusarielin biosynthesis cluster transcription factor FSL7 (496 aa).

A DNA-binding region (zn(2)-C6 fungal-type) is located at residues 16–46 (CDRCHELKIRCTRTGGTESRCDRCEKNDIDC). 5 disordered regions span residues 57-102 (PKSQ…SINS), 189-224 (RSIN…EDQM), 281-307 (ANHT…QSRS), 348-379 (GSTS…KPRT), and 444-470 (MTRE…AQAA). Composition is skewed to polar residues over residues 65–89 (GPNT…QEQM) and 207–218 (ELQSTQSASGSP). Low complexity predominate over residues 281-294 (ANHTSSSSSSNSTT). Residues 355-379 (YNDTTAHPSSASLPSQTGGPTKPRT) are compositionally biased toward polar residues. Residues 444–460 (MTREQHVSTGHGPDRHT) show a composition bias toward basic and acidic residues.

The protein resides in the nucleus. In terms of biological role, transcription regulator that specifically up-regulates the gene cluster that mediates the biosynthesis of fusarielins F, G and H, decaketide compounds with 5 methylations and a decaline core that act as mycoestrogens as they stimulate growth of MCF-7 breast cancer cells. Probably binds the 5'-CGGNNNCCG-3' motif present in the promoter of all the cluster genes. The sequence is that of Fusarielin biosynthesis cluster transcription factor FSL7 from Gibberella zeae (strain ATCC MYA-4620 / CBS 123657 / FGSC 9075 / NRRL 31084 / PH-1) (Wheat head blight fungus).